Consider the following 861-residue polypeptide: DNA topoisomerase 1 (861 aa).

Residues Lys-3–Ile-141 enclose the Toprim domain. Mg(2+) is bound by residues Glu-9 and Asp-110. The 416-residue stretch at Asn-157–Leu-572 folds into the Topo IA-type catalytic domain. The tract at residues Ser-191–Gln-196 is interaction with DNA. Catalysis depends on Tyr-318, which acts as the O-(5'-phospho-DNA)-tyrosine intermediate. 3 consecutive C4-type zinc fingers follow at residues Cys-596–Cys-628, Cys-658–Cys-685, and Cys-707–Cys-732.

Belongs to the type IA topoisomerase family. As to quaternary structure, monomer. It depends on Mg(2+) as a cofactor.

It catalyses the reaction ATP-independent breakage of single-stranded DNA, followed by passage and rejoining.. Functionally, releases the supercoiling and torsional tension of DNA, which is introduced during the DNA replication and transcription, by transiently cleaving and rejoining one strand of the DNA duplex. Introduces a single-strand break via transesterification at a target site in duplex DNA. The scissile phosphodiester is attacked by the catalytic tyrosine of the enzyme, resulting in the formation of a DNA-(5'-phosphotyrosyl)-enzyme intermediate and the expulsion of a 3'-OH DNA strand. The free DNA strand then undergoes passage around the unbroken strand, thus removing DNA supercoils. Finally, in the religation step, the DNA 3'-OH attacks the covalent intermediate to expel the active-site tyrosine and restore the DNA phosphodiester backbone. This chain is DNA topoisomerase 1, found in Buchnera aphidicola subsp. Acyrthosiphon pisum (strain APS) (Acyrthosiphon pisum symbiotic bacterium).